Here is a 247-residue protein sequence, read N- to C-terminus: 2,5-diamino-6-ribosylamino-4(3H)-pyrimidinone 5'-phosphate reductase (247 aa).

Residues T75, D79, G165, and 187–191 (GASII) contribute to the NADP(+) site.

The protein belongs to the HTP reductase family. In terms of assembly, homodimer.

The catalysed reaction is 2,5-diamino-6-(1-D-ribitylamino)pyrimidin-4(3H)-one 5'-phosphate + NADP(+) = 2,5-diamino-6-(1-D-ribosylamino)pyrimidin-4(3H)-one 5'-phosphate + NADPH + H(+). It catalyses the reaction 2,5-diamino-6-(1-D-ribitylamino)pyrimidin-4(3H)-one 5'-phosphate + NAD(+) = 2,5-diamino-6-(1-D-ribosylamino)pyrimidin-4(3H)-one 5'-phosphate + NADH + H(+). Its pathway is cofactor biosynthesis; riboflavin biosynthesis. Functionally, catalyzes an early step in riboflavin biosynthesis, the NADPH-dependent reduction of the ribose side chain of 2,5-diamino-6-ribosylamino-4(3H)-pyrimidinone 5'-phosphate, yielding 2,5-diamino-6-ribitylamino-4(3H)-pyrimidinone 5'-phosphate. In Debaryomyces hansenii (strain ATCC 36239 / CBS 767 / BCRC 21394 / JCM 1990 / NBRC 0083 / IGC 2968) (Yeast), this protein is 2,5-diamino-6-ribosylamino-4(3H)-pyrimidinone 5'-phosphate reductase (RIB7).